A 205-amino-acid polypeptide reads, in one-letter code: GTP cyclohydrolase-2 (205 aa).

Residue 49–53 participates in GTP binding; sequence RIHSE. Cysteine 54, cysteine 65, and cysteine 67 together coordinate Zn(2+). Residues glutamine 70, 92 to 94, and threonine 114 each bind GTP; that span reads EGR. Catalysis depends on aspartate 126, which acts as the Proton acceptor. The Nucleophile role is filled by arginine 128. GTP-binding residues include threonine 149 and lysine 154.

It belongs to the GTP cyclohydrolase II family. Requires Zn(2+) as cofactor.

The enzyme catalyses GTP + 4 H2O = 2,5-diamino-6-hydroxy-4-(5-phosphoribosylamino)-pyrimidine + formate + 2 phosphate + 3 H(+). The protein operates within cofactor biosynthesis; riboflavin biosynthesis; 5-amino-6-(D-ribitylamino)uracil from GTP: step 1/4. Its function is as follows. Catalyzes the conversion of GTP to 2,5-diamino-6-ribosylamino-4(3H)-pyrimidinone 5'-phosphate (DARP), formate and pyrophosphate. The sequence is that of GTP cyclohydrolase-2 from Shewanella sediminis (strain HAW-EB3).